A 115-amino-acid chain; its full sequence is Putative membrane protein insertion efficiency factor (115 aa).

This sequence belongs to the UPF0161 family.

The protein resides in the cell membrane. In terms of biological role, could be involved in insertion of integral membrane proteins into the membrane. This chain is Putative membrane protein insertion efficiency factor, found in Mycobacterium avium (strain 104).